A 1664-amino-acid chain; its full sequence is Peroxisome proliferator-activated receptor gamma coactivator-related protein 1 (1664 aa).

7 disordered regions span residues 1–44 (MAAR…GTLG), 167–255 (LLTL…VASF), 436–555 (PVVP…EGPL), 681–701 (VDPV…VSSA), 735–793 (IESG…ADIP), 818–873 (CLVP…PTPP), and 1045–1068 (HGAP…HPKH). Residues 12 to 22 (APPPSGGPGPD) are compositionally biased toward pro residues. Over residues 23 to 32 (PGGGARGSGW) the composition is skewed to gly residues. Residues 201 to 224 (SLPDPSWDFSPPSFLETSSPKLPS) are compositionally biased toward low complexity. Position 237 is a phosphoserine (serine 237). The interval 433–467 (VVEPVVPKEPQNPPANAAPGSQRARKGRKKKSKEQ) is necessary for interaction with CREB1 and NRF1 and for transcriptional coactivation. The segment covering 455-464 (RARKGRKKKS) has biased composition (basic residues). Over residues 482–499 (SSRGQSTVGTEVTSQVDN) the composition is skewed to polar residues. The span at 522-531 (RAWARAWAAA) shows a compositional bias: low complexity. Residues 533–549 (ENSSPKNLERSAGQSSP) show a composition bias toward polar residues. Phosphoserine occurs at positions 536 and 548. A compositionally biased stretch (pro residues) spans 823 to 836 (GPSPASPSPEPPVS). The segment covering 862–873 (VQSVSPAVPTPP) has biased composition (low complexity). Residue serine 1076 is modified to Phosphoserine. Disordered regions lie at residues 1093 to 1130 (EEPA…STVP), 1182 to 1209 (SEAK…DIPQ), and 1334 to 1528 (VLSL…DHYQ). Positions 1096-1113 (ASERLKPETQETRPREKP) are enriched in basic and acidic residues. The span at 1365 to 1383 (PSAPCLAPSSLLSPEASPC) shows a compositional bias: low complexity. Residues 1379–1450 (EASPCRNDMN…SSSSSSSSSS (72 aa)) form a necessary for interaction with CREB1 and NRF1 region. A compositionally biased stretch (basic residues) spans 1400-1409 (RSMRCYRKAC). Phosphoserine occurs at positions 1411 and 1413. Low complexity-rich tracts occupy residues 1427–1459 (SRSV…RSLS) and 1468–1500 (SSCS…SSSR). Residues 1501–1519 (SRSRSPSPRRRSDRRRRYS) are compositionally biased toward basic residues. The region spanning 1543-1619 (RVVFIGKIPG…QPFDLCFGGR (77 aa)) is the RRM domain.

Interacts with CREB1 and NRF1. In terms of tissue distribution, strongly expressed in heart and skeletal muscle, moderately in lung, placenta, intestine, liver, kidney, spleen, thymus, colon and brain. Also expressed in several oncocytic thyroid tumors.

The protein localises to the nucleus. Functionally, acts as a coactivator during transcriptional activation of nuclear genes related to mitochondrial biogenesis and cell growth. Involved in the transcription coactivation of CREB and NRF1 target genes. In Homo sapiens (Human), this protein is Peroxisome proliferator-activated receptor gamma coactivator-related protein 1 (PPRC1).